The primary structure comprises 434 residues: uncharacterized protein (434 aa).

The residue at position 216 (Lys216) is an N6-(pyridoxal phosphate)lysine.

This is an uncharacterized protein from Schizosaccharomyces pombe (strain 972 / ATCC 24843) (Fission yeast).